We begin with the raw amino-acid sequence, 223 residues long: UPF0441 protein YgiB (223 aa).

Low complexity predominate over residues 178-195 (TVPKTAMAPKPATTTTVT). The tract at residues 178-223 (TVPKTAMAPKPATTTTVTRGGFGESVAKQSTMQRSATGTSSRSMGG) is disordered. Polar residues predominate over residues 204-223 (AKQSTMQRSATGTSSRSMGG).

Belongs to the UPF0441 family.

This chain is UPF0441 protein YgiB, found in Shigella dysenteriae serotype 1 (strain Sd197).